A 596-amino-acid chain; its full sequence is Elongation factor 4 (596 aa).

A tr-type G domain is found at 2–184 (KHIRNFSIIA…TIVAQIPSPE (183 aa)). GTP is bound by residues 14–19 (DHGKST) and 131–134 (NKID).

The protein belongs to the TRAFAC class translation factor GTPase superfamily. Classic translation factor GTPase family. LepA subfamily.

The protein localises to the cell inner membrane. The catalysed reaction is GTP + H2O = GDP + phosphate + H(+). Its function is as follows. Required for accurate and efficient protein synthesis under certain stress conditions. May act as a fidelity factor of the translation reaction, by catalyzing a one-codon backward translocation of tRNAs on improperly translocated ribosomes. Back-translocation proceeds from a post-translocation (POST) complex to a pre-translocation (PRE) complex, thus giving elongation factor G a second chance to translocate the tRNAs correctly. Binds to ribosomes in a GTP-dependent manner. The sequence is that of Elongation factor 4 from Shewanella amazonensis (strain ATCC BAA-1098 / SB2B).